A 531-amino-acid polypeptide reads, in one-letter code: Cytosolic Fe-S cluster assembly factor NAR1 (531 aa).

[4Fe-4S] cluster contacts are provided by cysteine 20, cysteine 72, cysteine 75, cysteine 78, cysteine 184, and cysteine 239. The disordered stretch occupies residues 395–426; sequence TSSTTTTKTNPLVARRKARLSSKRSESGAQDV. The [4Fe-4S] cluster site is built by cysteine 442 and cysteine 446.

The protein belongs to the NARF family.

Its function is as follows. Component of the cytosolic Fe/S protein assembly machinery. Required for maturation of extramitochondrial Fe/S proteins. May play a role in the transfer of pre-assembled Fe/S clusters to target apoproteins. The protein is Cytosolic Fe-S cluster assembly factor NAR1 (NAR1) of Meyerozyma guilliermondii (strain ATCC 6260 / CBS 566 / DSM 6381 / JCM 1539 / NBRC 10279 / NRRL Y-324) (Yeast).